The chain runs to 308 residues: Ribosomal RNA small subunit methyltransferase H (308 aa).

S-adenosyl-L-methionine contacts are provided by residues 32–34 (AGH), aspartate 52, phenylalanine 79, aspartate 100, and glutamine 107.

It belongs to the methyltransferase superfamily. RsmH family.

It is found in the cytoplasm. The catalysed reaction is cytidine(1402) in 16S rRNA + S-adenosyl-L-methionine = N(4)-methylcytidine(1402) in 16S rRNA + S-adenosyl-L-homocysteine + H(+). Its function is as follows. Specifically methylates the N4 position of cytidine in position 1402 (C1402) of 16S rRNA. The protein is Ribosomal RNA small subunit methyltransferase H of Mycoplasma mycoides subsp. mycoides SC (strain CCUG 32753 / NCTC 10114 / PG1).